Here is a 469-residue protein sequence, read N- to C-terminus: 3-isopropylmalate dehydratase large subunit (469 aa).

[4Fe-4S] cluster is bound by residues Cys347, Cys410, and Cys413.

Belongs to the aconitase/IPM isomerase family. LeuC type 1 subfamily. Heterodimer of LeuC and LeuD. Requires [4Fe-4S] cluster as cofactor.

It carries out the reaction (2R,3S)-3-isopropylmalate = (2S)-2-isopropylmalate. It functions in the pathway amino-acid biosynthesis; L-leucine biosynthesis; L-leucine from 3-methyl-2-oxobutanoate: step 2/4. In terms of biological role, catalyzes the isomerization between 2-isopropylmalate and 3-isopropylmalate, via the formation of 2-isopropylmaleate. The polypeptide is 3-isopropylmalate dehydratase large subunit (Polynucleobacter necessarius subsp. necessarius (strain STIR1)).